The chain runs to 164 residues: Cyclic pyranopterin monophosphate synthase (164 aa).

Substrate contacts are provided by residues 77–79 (LCH) and 115–116 (ME). D130 is a catalytic residue.

This sequence belongs to the MoaC family. Homohexamer; trimer of dimers.

It carries out the reaction (8S)-3',8-cyclo-7,8-dihydroguanosine 5'-triphosphate = cyclic pyranopterin phosphate + diphosphate. The protein operates within cofactor biosynthesis; molybdopterin biosynthesis. In terms of biological role, catalyzes the conversion of (8S)-3',8-cyclo-7,8-dihydroguanosine 5'-triphosphate to cyclic pyranopterin monophosphate (cPMP). This chain is Cyclic pyranopterin monophosphate synthase, found in Sinorhizobium medicae (strain WSM419) (Ensifer medicae).